We begin with the raw amino-acid sequence, 337 residues long: Glyceraldehyde-3-phosphate dehydrogenase (337 aa).

Residues arginine 12–isoleucine 13, aspartate 34, and arginine 79 each bind NAD(+). Residues serine 150–threonine 152, threonine 181, threonine 210–glycine 211, and arginine 233 each bind D-glyceraldehyde 3-phosphate. Cysteine 151 acts as the Nucleophile in catalysis. Asparagine 315 lines the NAD(+) pocket.

The protein belongs to the glyceraldehyde-3-phosphate dehydrogenase family. In terms of assembly, homotetramer.

The protein resides in the cytoplasm. The enzyme catalyses D-glyceraldehyde 3-phosphate + phosphate + NAD(+) = (2R)-3-phospho-glyceroyl phosphate + NADH + H(+). The protein operates within carbohydrate degradation; glycolysis; pyruvate from D-glyceraldehyde 3-phosphate: step 1/5. The polypeptide is Glyceraldehyde-3-phosphate dehydrogenase (GPD) (Podospora anserina (Pleurage anserina)).